The primary structure comprises 432 residues: Glutamate-1-semialdehyde 2,1-aminomutase (432 aa).

At Lys-269 the chain carries N6-(pyridoxal phosphate)lysine.

This sequence belongs to the class-III pyridoxal-phosphate-dependent aminotransferase family. HemL subfamily. Homodimer. The cofactor is pyridoxal 5'-phosphate.

The protein resides in the cytoplasm. The catalysed reaction is (S)-4-amino-5-oxopentanoate = 5-aminolevulinate. Its pathway is porphyrin-containing compound metabolism; protoporphyrin-IX biosynthesis; 5-aminolevulinate from L-glutamyl-tRNA(Glu): step 2/2. It functions in the pathway porphyrin-containing compound metabolism; chlorophyll biosynthesis. The chain is Glutamate-1-semialdehyde 2,1-aminomutase from Chloroherpeton thalassium (strain ATCC 35110 / GB-78).